The chain runs to 313 residues: tRNA dimethylallyltransferase (313 aa).

Position 12-19 (12-19 (GPTASGKS)) interacts with ATP. Residue 14-19 (TASGKS) coordinates substrate. 2 interaction with substrate tRNA regions span residues 37–40 (DSMQ) and 161–165 (QRSIR).

Belongs to the IPP transferase family. In terms of assembly, monomer. Mg(2+) serves as cofactor.

The catalysed reaction is adenosine(37) in tRNA + dimethylallyl diphosphate = N(6)-dimethylallyladenosine(37) in tRNA + diphosphate. Catalyzes the transfer of a dimethylallyl group onto the adenine at position 37 in tRNAs that read codons beginning with uridine, leading to the formation of N6-(dimethylallyl)adenosine (i(6)A). The polypeptide is tRNA dimethylallyltransferase (Pelagibacter ubique (strain HTCC1062)).